Here is a 331-residue protein sequence, read N- to C-terminus: NAD-dependent protein deacetylase HST2 (331 aa).

In terms of domain architecture, Deacetylase sirtuin-type spans Met1 to Asp262. NAD(+) is bound by residues Gly26–Tyr46 and Gln109–Asp112. The active-site Proton acceptor is the His129. Zn(2+) contacts are provided by Cys137, Cys140, Cys161, and Cys164. NAD(+)-binding positions include Gly201–Ser203, Asn226–Glu228, and Cys248. Residues Tyr276 to Ile331 are a coiled coil. The interval Glu283–Asp319 is disordered.

The protein belongs to the sirtuin family. Class I subfamily. It depends on Zn(2+) as a cofactor.

The protein localises to the cytoplasm. The protein resides in the nucleus. The enzyme catalyses N(6)-acetyl-L-lysyl-[protein] + NAD(+) + H2O = 2''-O-acetyl-ADP-D-ribose + nicotinamide + L-lysyl-[protein]. Functionally, NAD-dependent histone deacetylase that is involved in nuclear silencing events. Derepresses subtelomeric silencing and increases repression in nucleolar (rDNA) silencing. Its function is negatively regulated by active nuclear export. The sequence is that of NAD-dependent protein deacetylase HST2 (HST2) from Candida albicans (strain SC5314 / ATCC MYA-2876) (Yeast).